The chain runs to 696 residues: Caprolactamase subunit alpha (696 aa).

This sequence belongs to the HyuA family. The caprolactamase is a heterotetramer composed of two alpha subunits (CapA) and two beta subunits (CapB).

Its activity is regulated as follows. Activity is dependent on the presence of ATP and bicarbonate. The requirement for bicarbonate may be related to allosteric activation through conformational effects, but it is also conceivable that carboxyphosphate is formed and acts as a mediator in caprolactam activation, forming carboxy- or phospholactim. Functionally, component of a caprolactamase involved in the degradation of caprolactam, an industrial compound mainly used in the production of Nylon 6. Catalyzes the ATP-dependent hydrolysis of the caprolactam ring to form 6-aminocaproic acid (6-ACA). The alpha subunit is responsible for ATP-dependent substrate phosphorylation. The enzyme cannot use 5-oxoproline. This is Caprolactamase subunit alpha from Pseudomonas jessenii.